We begin with the raw amino-acid sequence, 38 residues long: Augerpeptide hhe53 (38 aa).

In terms of processing, contains 2 disulfide bonds. As to expression, expressed by the venom duct.

The protein resides in the secreted. The sequence is that of Augerpeptide hhe53 from Hastula hectica (Sea snail).